The primary structure comprises 394 residues: Ceramide glucosyltransferase-B (394 aa).

At 1–10 (MAVLDLALQG) the chain is on the lumenal side. A helical membrane pass occupies residues 11–32 (LAIFGCILFFVLWFMHFLSIVY). Residues 33–195 (TRLHLNKKVS…QVYFGTSHPR (163 aa)) lie on the Cytoplasmic side of the membrane. Residue D92 is a short sequence motif, D1. Residue D144 is a short sequence motif, D2. A helical transmembrane segment spans residues 196 to 215 (SYISANVTGIKCVTGMSCLM). Residues 216–287 (RKEVLDQAGG…KLRINMLPAT (72 aa)) are Lumenal-facing. Residue D236 is a short sequence motif, D3. The active-site Proton acceptor is D236. The short motif at 272–276 (RMIRW) is the (Q/R)XXRW element. The helical transmembrane segment at 288 to 304 (IICEPISECFVASLIIG) threads the bilayer. At 305-309 (WAAHH) the chain is on the cytoplasmic side. Residues 310–328 (IFRWDIMVFFMCHCLAWFI) traverse the membrane as a helical segment. At 329–348 (FDYIQLRGVQGGPLNFSKLD) the chain is on the lumenal side. A helical membrane pass occupies residues 349–369 (YAVAWFIRESMTIYIFLSALW). Residues 370-394 (DPTISWRTGRYRLRCGGTAEEILDV) lie on the Cytoplasmic side of the membrane.

Belongs to the glycosyltransferase 2 family.

It is found in the golgi apparatus membrane. The enzyme catalyses an N-acylsphing-4-enine + UDP-alpha-D-glucose = a beta-D-glucosyl-(1&lt;-&gt;1')-N-acylsphing-4-enine + UDP + H(+). It carries out the reaction UDP-alpha-D-xylose + an N-acylsphing-4-enine = a beta-D-xylosyl-(1&lt;-&gt;1')-N-acylsphing-4-enine + UDP + H(+). The catalysed reaction is N-(9Z-octadecenoyl)-sphing-4-enine + UDP-alpha-D-xylose = beta-D-xylosyl-(1&lt;-&gt;1')-N-(9Z-octadecenoyl)-sphing-4-enine + UDP + H(+). It functions in the pathway lipid metabolism; sphingolipid metabolism. In terms of biological role, participates in the initial step of the glucosylceramide-based glycosphingolipid/GSL synthetic pathway at the cytosolic surface of the Golgi. Catalyzes the transfer of glucose from UDP-glucose to ceramide to produce glucosylceramide/GlcCer (such as beta-D-glucosyl-(1&lt;-&gt;1')-N-acylsphing-4-enine). Glucosylceramide is the core component of glycosphingolipids/GSLs, amphipathic molecules consisting of a ceramide lipid moiety embedded in the outer leaflet of the membrane, linked to one of hundreds of different externally oriented oligosaccharide structures. Glycosphingolipids are essential components of membrane microdomains that mediate membrane trafficking and signal transduction. They are implicated in many fundamental cellular processes, including growth, differentiation, migration, morphogenesis, cell-to-cell and cell-to-matrix interactions. Catalyzes the synthesis of xylosylceramide/XylCer (such as beta-D-xylosyl-(1&lt;-&gt;1')-N-acylsphing-4-enine) using UDP-Xyl as xylose donor. This Xenopus laevis (African clawed frog) protein is Ceramide glucosyltransferase-B (ugcg-b).